Consider the following 203-residue polypeptide: Dual-action ribosomal maturation protein DarP (203 aa).

Disordered stretches follow at residues 1 to 31 (MPPM…SKSQ) and 182 to 203 (GGAS…DDEA). Positions 186-203 (DSDDEAADDAGDDHDDEA) are enriched in acidic residues.

It belongs to the DarP family.

Its subcellular location is the cytoplasm. Member of a network of 50S ribosomal subunit biogenesis factors which assembles along the 30S-50S interface, preventing incorrect 23S rRNA structures from forming. Promotes peptidyl transferase center (PTC) maturation. This is Dual-action ribosomal maturation protein DarP from Burkholderia cenocepacia (strain HI2424).